The sequence spans 652 residues: Acetyl-coenzyme A synthetase (652 aa).

CoA-binding positions include 191–194, threonine 311, and asparagine 335; that span reads RAGR. Residues 387 to 389, 411 to 416, aspartate 500, and arginine 515 contribute to the ATP site; these read GEP and DTWWQT. CoA is bound at residue serine 523. An ATP-binding site is contributed by arginine 526. Residues valine 537, histidine 539, and isoleucine 542 each coordinate Mg(2+). Position 584 (arginine 584) interacts with CoA. Lysine 609 bears the N6-acetyllysine mark.

The protein belongs to the ATP-dependent AMP-binding enzyme family. The cofactor is Mg(2+). Acetylated. Deacetylation by the SIR2-homolog deacetylase activates the enzyme.

It catalyses the reaction acetate + ATP + CoA = acetyl-CoA + AMP + diphosphate. In terms of biological role, catalyzes the conversion of acetate into acetyl-CoA (AcCoA), an essential intermediate at the junction of anabolic and catabolic pathways. Acs undergoes a two-step reaction. In the first half reaction, Acs combines acetate with ATP to form acetyl-adenylate (AcAMP) intermediate. In the second half reaction, it can then transfer the acetyl group from AcAMP to the sulfhydryl group of CoA, forming the product AcCoA. Its function is as follows. Enables the cell to use acetate during aerobic growth to generate energy via the TCA cycle, and biosynthetic compounds via the glyoxylate shunt. Acetylates CheY, the response regulator involved in flagellar movement and chemotaxis. The sequence is that of Acetyl-coenzyme A synthetase from Cronobacter sakazakii (strain ATCC BAA-894) (Enterobacter sakazakii).